The sequence spans 436 residues: 3-ketoacyl-CoA thiolase (436 aa).

Cys-99 serves as the catalytic Acyl-thioester intermediate. Active-site proton acceptor residues include His-392 and Cys-422.

Belongs to the thiolase-like superfamily. Thiolase family. Heterotetramer of two alpha chains (FadJ) and two beta chains (FadI).

The protein resides in the cytoplasm. It carries out the reaction an acyl-CoA + acetyl-CoA = a 3-oxoacyl-CoA + CoA. It functions in the pathway lipid metabolism; fatty acid beta-oxidation. Catalyzes the final step of fatty acid oxidation in which acetyl-CoA is released and the CoA ester of a fatty acid two carbons shorter is formed. The chain is 3-ketoacyl-CoA thiolase from Salmonella newport (strain SL254).